The following is a 96-amino-acid chain: Transcriptional regulator ATRY (96 aa).

The GATA-type; atypical zinc-finger motif lies at 1 to 12 (VICTACGQQVNQ). Positions 1–96 (VICTACGQQV…IAVCDSVLEN (96 aa)) constitute an ADD domain. The segment at 27 to 82 (LICKRWCAEGGNLICCDSCHNAFCKKCIWRNLGRKEISKIMNEKNEWHCYICCPEP) adopts a PHD-type; atypical zinc-finger fold.

It belongs to the SNF2/RAD54 helicase family. Expressed in developing and adult testis. Also weakly expressed in prostate and epididymis.

It localises to the nucleus. The enzyme catalyses ATP + H2O = ADP + phosphate + H(+). In terms of biological role, could be a global transcriptional regulator. Modifies gene expression by affecting chromatin. This chain is Transcriptional regulator ATRY (ATRY), found in Notamacropus eugenii (Tammar wallaby).